A 193-amino-acid polypeptide reads, in one-letter code: Probable GTP-binding protein EngB (193 aa).

Residues 22–193 (MYPEISFIGR…ELWQIIEDLL (172 aa)) form the EngB-type G domain. Residues 30–37 (GRSNVGKS), 57–61 (GKTRT), 75–78 (DLPG), 142–145 (TKMD), and 174–176 (FSS) contribute to the GTP site. Mg(2+) is bound by residues Ser-37 and Thr-59.

Belongs to the TRAFAC class TrmE-Era-EngA-EngB-Septin-like GTPase superfamily. EngB GTPase family. The cofactor is Mg(2+).

Necessary for normal cell division and for the maintenance of normal septation. The polypeptide is Probable GTP-binding protein EngB (Natranaerobius thermophilus (strain ATCC BAA-1301 / DSM 18059 / JW/NM-WN-LF)).